A 521-amino-acid polypeptide reads, in one-letter code: Glutamate--cysteine ligase (521 aa).

The protein belongs to the glutamate--cysteine ligase type 1 family. Type 1 subfamily.

It carries out the reaction L-cysteine + L-glutamate + ATP = gamma-L-glutamyl-L-cysteine + ADP + phosphate + H(+). It functions in the pathway sulfur metabolism; glutathione biosynthesis; glutathione from L-cysteine and L-glutamate: step 1/2. The chain is Glutamate--cysteine ligase from Aliivibrio salmonicida (strain LFI1238) (Vibrio salmonicida (strain LFI1238)).